A 157-amino-acid chain; its full sequence is Ribonuclease H (157 aa).

Residues 5 to 146 (IMKQVEIFTD…CDDLARTAAE (142 aa)) enclose the RNase H type-1 domain. Residues Asp14, Glu52, Asp74, and Asp138 each contribute to the Mg(2+) site.

The protein belongs to the RNase H family. As to quaternary structure, monomer. Requires Mg(2+) as cofactor.

It is found in the cytoplasm. It catalyses the reaction Endonucleolytic cleavage to 5'-phosphomonoester.. In terms of biological role, endonuclease that specifically degrades the RNA of RNA-DNA hybrids. The polypeptide is Ribonuclease H (Aliivibrio salmonicida (strain LFI1238) (Vibrio salmonicida (strain LFI1238))).